Consider the following 140-residue polypeptide: Large-conductance mechanosensitive channel (140 aa).

The next 2 membrane-spanning stretches (helical) occupy residues Phe11–Gly31 and Gly82–Val102.

This sequence belongs to the MscL family. As to quaternary structure, homopentamer.

It is found in the cell inner membrane. Functionally, channel that opens in response to stretch forces in the membrane lipid bilayer. May participate in the regulation of osmotic pressure changes within the cell. This Parabacteroides distasonis (strain ATCC 8503 / DSM 20701 / CIP 104284 / JCM 5825 / NCTC 11152) protein is Large-conductance mechanosensitive channel.